We begin with the raw amino-acid sequence, 101 residues long: Large ribosomal subunit protein uL23 (101 aa).

It belongs to the universal ribosomal protein uL23 family. In terms of assembly, part of the 50S ribosomal subunit. Contacts protein L29, and trigger factor when it is bound to the ribosome.

In terms of biological role, one of the early assembly proteins it binds 23S rRNA. One of the proteins that surrounds the polypeptide exit tunnel on the outside of the ribosome. Forms the main docking site for trigger factor binding to the ribosome. This Pseudarthrobacter chlorophenolicus (strain ATCC 700700 / DSM 12829 / CIP 107037 / JCM 12360 / KCTC 9906 / NCIMB 13794 / A6) (Arthrobacter chlorophenolicus) protein is Large ribosomal subunit protein uL23.